A 97-amino-acid polypeptide reads, in one-letter code: Eclosion hormone (97 aa).

Positions 1–17 (MNCKPLILCTFVAVAMC) are cleaved as a signal peptide. Disulfide bonds link cysteine 48–cysteine 72, cysteine 52–cysteine 68, and cysteine 55–cysteine 83.

It belongs to the insect eclosion hormone family. As to expression, expressed in a single pair of brain neurons which extend their processes the entire length of the central nervous system and also to the corpora cardiaca portion of the ring gland. These cells show massive depletion of immunoreactive Eh at ecdysis.

The protein localises to the secreted. Functionally, neuropeptide that triggers the performance of ecdysis behaviors at the end of a molt. It triggers adult behavior patterns: larval, pupal and adult ecdysis, and plasticization during the molt. The chain is Eclosion hormone (Eh) from Drosophila melanogaster (Fruit fly).